A 716-amino-acid polypeptide reads, in one-letter code: Fatty acid oxidation complex subunit alpha (716 aa).

The segment at 1–189 is enoyl-CoA hydratase/isomerase; that stretch reads MIYQSPTIQV…KVGAIDAVVA (189 aa). Asp-296 contacts substrate. Positions 311–716 are 3-hydroxyacyl-CoA dehydrogenase; the sequence is QAVNSAAVLG…AATNGSYYPA (406 aa). NAD(+) is bound by residues Met-324, Asp-343, 400-402, Lys-407, and Ser-429; that span reads VVE. His-450 serves as the catalytic For 3-hydroxyacyl-CoA dehydrogenase activity. Asn-453 contributes to the NAD(+) binding site. Asn-500 and Tyr-660 together coordinate substrate.

It in the N-terminal section; belongs to the enoyl-CoA hydratase/isomerase family. In the C-terminal section; belongs to the 3-hydroxyacyl-CoA dehydrogenase family. As to quaternary structure, heterotetramer of two alpha chains (FadB) and two beta chains (FadA).

It carries out the reaction a (3S)-3-hydroxyacyl-CoA + NAD(+) = a 3-oxoacyl-CoA + NADH + H(+). The enzyme catalyses a (3S)-3-hydroxyacyl-CoA = a (2E)-enoyl-CoA + H2O. It catalyses the reaction a 4-saturated-(3S)-3-hydroxyacyl-CoA = a (3E)-enoyl-CoA + H2O. The catalysed reaction is (3S)-3-hydroxybutanoyl-CoA = (3R)-3-hydroxybutanoyl-CoA. It carries out the reaction a (3Z)-enoyl-CoA = a 4-saturated (2E)-enoyl-CoA. The enzyme catalyses a (3E)-enoyl-CoA = a 4-saturated (2E)-enoyl-CoA. It functions in the pathway lipid metabolism; fatty acid beta-oxidation. Its function is as follows. Involved in the aerobic and anaerobic degradation of long-chain fatty acids via beta-oxidation cycle. Catalyzes the formation of 3-oxoacyl-CoA from enoyl-CoA via L-3-hydroxyacyl-CoA. It can also use D-3-hydroxyacyl-CoA and cis-3-enoyl-CoA as substrate. The polypeptide is Fatty acid oxidation complex subunit alpha (Shewanella loihica (strain ATCC BAA-1088 / PV-4)).